The chain runs to 623 residues: DNA mismatch repair protein MutL (623 aa).

The segment covering 353 to 368 has biased composition (polar residues); the sequence is AQQSAPRPANSYSPAS. Residues 353 to 389 are disordered; it reads AQQSAPRPANSYSPASWRTAPPAPRSEWSPQTAHPAH.

Belongs to the DNA mismatch repair MutL/HexB family.

Its function is as follows. This protein is involved in the repair of mismatches in DNA. It is required for dam-dependent methyl-directed DNA mismatch repair. May act as a 'molecular matchmaker', a protein that promotes the formation of a stable complex between two or more DNA-binding proteins in an ATP-dependent manner without itself being part of a final effector complex. The chain is DNA mismatch repair protein MutL from Brucella melitensis biotype 1 (strain ATCC 23456 / CCUG 17765 / NCTC 10094 / 16M).